We begin with the raw amino-acid sequence, 264 residues long: Major prion protein (264 aa).

A signal peptide spans 1 to 24 (MVKRHIGSWILVLFVVMWSDVGLC). Residues 25-241 (KKRPKPGGGW…ESQAYYQRGA (217 aa)) are interaction with GRB2, ERI3 and SYN1. The interval 27-119 (RPKPGGGWNT…WNKPSKPKTN (93 aa)) is disordered. 6 repeat units span residues 54 to 62 (SQGGGGWGQ), 63 to 70 (PHGGGWGQ), 71 to 78 (PHGGGWGQ), 79 to 86 (PHGGGWGQ), 87 to 94 (PHGGGWGQ), and 95 to 103 (PHGGGGWGQ). The segment at 54 to 103 (SQGGGGWGQPHGGGWGQPHGGGWGQPHGGGWGQPHGGGWGQPHGGGGWGQ) is 6 X 8 AA tandem repeats of P-H-G-G-G-W-G-Q. Residues 55 to 105 (QGGGGWGQPHGGGWGQPHGGGWGQPHGGGWGQPHGGGWGQPHGGGGWGQGG) show a composition bias toward gly residues. Residues His72, Gly73, Gly74, His80, Gly81, Gly82, His88, Gly89, Gly90, His96, Gly98, and Gly99 each contribute to the Cu(2+) site. The cysteines at positions 190 and 225 are disulfide-linked. N-linked (GlcNAc...) asparagine glycosylation is found at Asn192 and Asn208. Ala241 carries GPI-anchor amidated alanine lipidation. Positions 242 to 264 (SVILFSSPPVILLISLLIFLIVG) are cleaved as a propeptide — removed in mature form.

It belongs to the prion family. In terms of assembly, monomer and homodimer. Has a tendency to aggregate into amyloid fibrils containing a cross-beta spine, formed by a steric zipper of superposed beta-strands. Soluble oligomers may represent an intermediate stage on the path to fibril formation. Copper binding may promote oligomerization. Interacts with GRB2, APP, ERI3/PRNPIP and SYN1. Mislocalized cytosolically exposed PrP interacts with MGRN1; this interaction alters MGRN1 subcellular location and causes lysosomal enlargement. Interacts with KIAA1191.

The protein localises to the cell membrane. It is found in the golgi apparatus. Functionally, its primary physiological function is unclear. Has cytoprotective activity against internal or environmental stresses. May play a role in neuronal development and synaptic plasticity. May be required for neuronal myelin sheath maintenance. May play a role in iron uptake and iron homeostasis. Soluble oligomers are toxic to cultured neuroblastoma cells and induce apoptosis (in vitro). Association with GPC1 (via its heparan sulfate chains) targets PRNP to lipid rafts. Also provides Cu(2+) or Zn(2+) for the ascorbate-mediated GPC1 deaminase degradation of its heparan sulfate side chains. The polypeptide is Major prion protein (PRNP) (Bubalus bubalis (Domestic water buffalo)).